Consider the following 240-residue polypeptide: Orotidine 5'-phosphate decarboxylase (240 aa).

Substrate contacts are provided by residues Asp-15, Lys-37, 64-73 (DLKYHDIPNT), Thr-125, Arg-186, Gln-195, Gly-215, and Arg-216. Lys-66 functions as the Proton donor in the catalytic mechanism.

This sequence belongs to the OMP decarboxylase family. Type 1 subfamily. Homodimer.

It catalyses the reaction orotidine 5'-phosphate + H(+) = UMP + CO2. Its pathway is pyrimidine metabolism; UMP biosynthesis via de novo pathway; UMP from orotate: step 2/2. Functionally, catalyzes the decarboxylation of orotidine 5'-monophosphate (OMP) to uridine 5'-monophosphate (UMP). This chain is Orotidine 5'-phosphate decarboxylase, found in Pelobacter propionicus (strain DSM 2379 / NBRC 103807 / OttBd1).